The chain runs to 84 residues: Beta-cardiotoxin CTX23 (84 aa).

The signal sequence occupies residues 1–21; the sequence is MKTLLLTLVVVTIVCLDLGYT. 4 disulfide bridges follow: C24-C43, C36-C61, C65-C76, and C77-C82.

The protein belongs to the three-finger toxin family. Short-chain subfamily. Aminergic toxin sub-subfamily. In terms of tissue distribution, expressed by the venom gland.

The protein localises to the secreted. Acts as a beta-blocker by binding to beta-1 and beta-2 adrenergic receptors (ADRB1 and ADRB2). It dose-dependently decreases the heart rate (bradycardia), whereas conventional cardiotoxins increases it. At 100 mg/kg, intraperitoneal injection into mice provokes labored breathing, impaired locomotion, lack of response to external stimuli, and death (after 30 minutes). The sequence is that of Beta-cardiotoxin CTX23 from Ophiophagus hannah (King cobra).